The following is a 580-amino-acid chain: Long-chain-fatty-acid--AMP ligase FadD28 (580 aa).

A disordered region spans residues 421–440 (SERTFGGKIVTPSPGTPEGP).

It belongs to the ATP-dependent AMP-binding enzyme family.

The enzyme catalyses holo-[mycocerosate synthase] + a long-chain fatty acid + ATP = a long-chain fatty acyl-[mycocerosate synthase] + AMP + diphosphate. The catalysed reaction is a long-chain fatty acid + ATP + H(+) = a long-chain fatty acyl-AMP + diphosphate. It catalyses the reaction holo-[mycocerosate synthase] + a long-chain fatty acyl-AMP = a long-chain fatty acyl-[mycocerosate synthase] + AMP + H(+). The protein operates within lipid metabolism; fatty acid biosynthesis. Its function is as follows. Involved in the biosynthesis of phthiocerol dimycocerosate (PDIM), a cell wall-associated lipid found only in pathogenic mycobacteria. Catalyzes the activation of long-chain fatty acids as acyl-adenylates (acyl-AMP), which are then transferred to the multifunctional polyketide synthase Mas for further chain extension. This is Long-chain-fatty-acid--AMP ligase FadD28 (fadD28) from Mycobacterium bovis (strain ATCC BAA-935 / AF2122/97).